Reading from the N-terminus, the 502-residue chain is Lysine--tRNA ligase (502 aa).

Mg(2+) is bound by residues Glu-411 and Glu-418.

The protein belongs to the class-II aminoacyl-tRNA synthetase family. In terms of assembly, homodimer. Requires Mg(2+) as cofactor.

It is found in the cytoplasm. It catalyses the reaction tRNA(Lys) + L-lysine + ATP = L-lysyl-tRNA(Lys) + AMP + diphosphate. In Clostridium kluyveri (strain ATCC 8527 / DSM 555 / NBRC 12016 / NCIMB 10680 / K1), this protein is Lysine--tRNA ligase.